Consider the following 75-residue polypeptide: MKNQLNFNIVSDEELSEANGGKLTFIQSTAAGDLYYNTNTHKYVYQQTQNAFGAAANTIVNGWMGGAAGGFGLHH.

A propeptide spanning residues 1–21 (MKNQLNFNIVSDEELSEANGG) is cleaved from the precursor. Residues 30–52 (AAGDLYYNTNTHKYVYQQTQNAF) form a helical membrane-spanning segment.

Its subcellular location is the secreted. It is found in the host cell membrane. In terms of biological role, kills Lactococci. In Lactococcus lactis subsp. cremoris (Streptococcus cremoris), this protein is Bacteriocin lactococcin-A (lcnA).